Here is a 353-residue protein sequence, read N- to C-terminus: Probable butyrate kinase (353 aa).

It belongs to the acetokinase family.

The protein localises to the cytoplasm. The catalysed reaction is butanoate + ATP = butanoyl phosphate + ADP. This is Probable butyrate kinase from Bacteroides thetaiotaomicron (strain ATCC 29148 / DSM 2079 / JCM 5827 / CCUG 10774 / NCTC 10582 / VPI-5482 / E50).